The sequence spans 319 residues: Ribonucleoside-diphosphate reductase small chain (319 aa).

Residues Asp-70, Glu-101, and His-104 each coordinate Fe cation. Tyr-108 is an active-site residue. Glu-163, Glu-197, and His-200 together coordinate Fe cation. The segment at Phe-313–Phe-319 is interaction with R1.

Belongs to the ribonucleoside diphosphate reductase small chain family. Interacts with RNR1/OPG080 subunit. Can interact with host RNR1 supunit. The cofactor is Fe cation.

It carries out the reaction a 2'-deoxyribonucleoside 5'-diphosphate + [thioredoxin]-disulfide + H2O = a ribonucleoside 5'-diphosphate + [thioredoxin]-dithiol. Its function is as follows. Ribonucleoside-diphosphate reductase holoenzyme provides the precursors necessary for viral DNA synthesis. Allows virus growth in non-dividing cells. Catalyzes the biosynthesis of deoxyribonucleotides from the corresponding ribonucleotides. The sequence is that of Ribonucleoside-diphosphate reductase small chain (OPG048) from Vaccinia virus (strain Ankara) (VACV).